The chain runs to 381 residues: L-lactate dehydrogenase (381 aa).

The FMN hydroxy acid dehydrogenase domain maps to 1–380; sequence MIISASTDYR…SADSLVRELG (380 aa). Tyr24 contacts substrate. The FMN site is built by Ser106 and Gln127. Tyr129 is a binding site for substrate. Thr155 lines the FMN pocket. Residue Arg164 coordinates substrate. Lys251 is an FMN binding site. The active-site Proton acceptor is the His275. Position 278 (Arg278) interacts with substrate. 306–330 contributes to the FMN binding site; it reads DSGIRTGLDVVRMIALGADSVLLGR.

Belongs to the FMN-dependent alpha-hydroxy acid dehydrogenase family. As to quaternary structure, homotetramer. FMN serves as cofactor.

The protein resides in the cell inner membrane. It carries out the reaction (S)-lactate + A = pyruvate + AH2. Functionally, catalyzes the conversion of L-lactate to pyruvate. Is coupled to the respiratory chain. This chain is L-lactate dehydrogenase, found in Pseudomonas aeruginosa (strain UCBPP-PA14).